Reading from the N-terminus, the 954-residue chain is Glycine dehydrogenase (decarboxylating) (954 aa).

Lys702 bears the N6-(pyridoxal phosphate)lysine mark.

This sequence belongs to the GcvP family. As to quaternary structure, the glycine cleavage system is composed of four proteins: P, T, L and H. It depends on pyridoxal 5'-phosphate as a cofactor.

The catalysed reaction is N(6)-[(R)-lipoyl]-L-lysyl-[glycine-cleavage complex H protein] + glycine + H(+) = N(6)-[(R)-S(8)-aminomethyldihydrolipoyl]-L-lysyl-[glycine-cleavage complex H protein] + CO2. Functionally, the glycine cleavage system catalyzes the degradation of glycine. The P protein binds the alpha-amino group of glycine through its pyridoxal phosphate cofactor; CO(2) is released and the remaining methylamine moiety is then transferred to the lipoamide cofactor of the H protein. The protein is Glycine dehydrogenase (decarboxylating) of Xanthomonas euvesicatoria pv. vesicatoria (strain 85-10) (Xanthomonas campestris pv. vesicatoria).